Here is a 398-residue protein sequence, read N- to C-terminus: MSERVILAYSGGLDTSVAISWIGEETGREVVAVAIDLGQGGEDMEVVCQRALDCGAVEAVVVDARDEFAEGYCLPTILNNALYMDRYPLVSAISRPLIVKHLVEAAREHGGGIVAHGCTGKGNDQVRFEVGFASLAPDLEVLAPVRDYAWTREKAIAFAEENAIPINVTKRSPFSIDQNVWGRAVETGFLEHLWNAPTKDVYSYTEDPTVNWNTPDEVIVGFERGMPVSIDGNAVTMLQAIEELNRRAGAQGVGRLDVVEDRLVGIKSREIYEAPGAMVLITAHAELEHVTLERELARFKRHTDQRWAELVYDGLWYSPLKTALESFVAKTQEHVSGEIRLVLHGGHIAVNGRRSAESLYDFNLATYDEGDTFDQSAAKGFVYVHGLSSKLSARRDLQ.

8-16 (AYSGGLDTS) is a binding site for ATP. Tyrosine 87 provides a ligand contact to L-citrulline. Glycine 117 is an ATP binding site. 3 residues coordinate L-aspartate: threonine 119, asparagine 123, and aspartate 124. Asparagine 123 provides a ligand contact to L-citrulline. Residues arginine 127, serine 175, glutamate 260, and tyrosine 272 each contribute to the L-citrulline site.

It belongs to the argininosuccinate synthase family. Type 1 subfamily. In terms of assembly, homotetramer.

The protein localises to the cytoplasm. It catalyses the reaction L-citrulline + L-aspartate + ATP = 2-(N(omega)-L-arginino)succinate + AMP + diphosphate + H(+). Its pathway is amino-acid biosynthesis; L-arginine biosynthesis; L-arginine from L-ornithine and carbamoyl phosphate: step 2/3. The chain is Argininosuccinate synthase from Mycobacterium ulcerans (strain Agy99).